A 526-amino-acid polypeptide reads, in one-letter code: Bifunctional purine biosynthesis protein PurH (526 aa).

The MGS-like domain maps to 1–147; it reads MPSIKRALIS…KNWKHVAIVT (147 aa).

The protein belongs to the PurH family.

The catalysed reaction is (6R)-10-formyltetrahydrofolate + 5-amino-1-(5-phospho-beta-D-ribosyl)imidazole-4-carboxamide = 5-formamido-1-(5-phospho-D-ribosyl)imidazole-4-carboxamide + (6S)-5,6,7,8-tetrahydrofolate. It carries out the reaction IMP + H2O = 5-formamido-1-(5-phospho-D-ribosyl)imidazole-4-carboxamide. It functions in the pathway purine metabolism; IMP biosynthesis via de novo pathway; 5-formamido-1-(5-phospho-D-ribosyl)imidazole-4-carboxamide from 5-amino-1-(5-phospho-D-ribosyl)imidazole-4-carboxamide (10-formyl THF route): step 1/1. It participates in purine metabolism; IMP biosynthesis via de novo pathway; IMP from 5-formamido-1-(5-phospho-D-ribosyl)imidazole-4-carboxamide: step 1/1. In Neisseria meningitidis serogroup C / serotype 2a (strain ATCC 700532 / DSM 15464 / FAM18), this protein is Bifunctional purine biosynthesis protein PurH.